A 123-amino-acid polypeptide reads, in one-letter code: Small ribosomal subunit protein uS13 (123 aa).

The interval 94–123 is disordered; sequence RRGLPVRGQHTKNNARTRKGPARAIAGKKK.

The protein belongs to the universal ribosomal protein uS13 family. In terms of assembly, part of the 30S ribosomal subunit. Forms a loose heterodimer with protein S19. Forms two bridges to the 50S subunit in the 70S ribosome.

In terms of biological role, located at the top of the head of the 30S subunit, it contacts several helices of the 16S rRNA. In the 70S ribosome it contacts the 23S rRNA (bridge B1a) and protein L5 of the 50S subunit (bridge B1b), connecting the 2 subunits; these bridges are implicated in subunit movement. Contacts the tRNAs in the A and P-sites. This is Small ribosomal subunit protein uS13 from Oenococcus oeni (strain ATCC BAA-331 / PSU-1).